The sequence spans 315 residues: MSQANLEFPESVAAAPRGPYRGRFAPSPTGPLHIGSLVTALASWLDARVHGGTWLVRIEDIDFQRNVPGADRDILASLETLGLVPDEAPQWQSAHLPRFEAALAQLQAIDRLYPCGCTRREIADSITTVDAQGRLRHQTLIYPGTCRNGLMGRPPRAWRVRLPDADAATVCFDDRWQGTQCQNLAEAVGDFVLKRADGMWAYQIAVVVDDAAQGITDVVRGADLLDSTPRQIYLQRLLGLPAVRYLHVPVVVNAAGEKLSKQTGARAINRSQPLAALTEAARHLGLEIRAADMEGFYRAAVPAWAHRLAQLTPAA.

Residues Arg-23–Ser-27 and Glu-59 each bind L-glutamate. A 'HIGH' region motif is present at residues Pro-26 to Ser-36. The Zn(2+) site is built by Cys-115, Cys-117, Tyr-142, and Cys-146. 2 residues coordinate L-glutamate: Tyr-202 and Arg-220. Positions Lys-258–Gln-262 match the 'KMSKS' region motif. ATP is bound at residue Lys-261.

Belongs to the class-I aminoacyl-tRNA synthetase family. GluQ subfamily. Requires Zn(2+) as cofactor.

Its function is as follows. Catalyzes the tRNA-independent activation of glutamate in presence of ATP and the subsequent transfer of glutamate onto a tRNA(Asp). Glutamate is transferred on the 2-amino-5-(4,5-dihydroxy-2-cyclopenten-1-yl) moiety of the queuosine in the wobble position of the QUC anticodon. This is Glutamyl-Q tRNA(Asp) synthetase from Ralstonia nicotianae (strain ATCC BAA-1114 / GMI1000) (Ralstonia solanacearum).